The sequence spans 386 residues: Dual-specificity RNA methyltransferase RlmN (386 aa).

Catalysis depends on Glu-94, which acts as the Proton acceptor. The 242-residue stretch at 100-341 folds into the Radical SAM core domain; the sequence is EENRGTLCIS…VTTIRKTRGD (242 aa). Cysteines 107 and 347 form a disulfide. Positions 114, 118, and 121 each coordinate [4Fe-4S] cluster. S-adenosyl-L-methionine is bound by residues 173-174, Ser-205, 227-229, and Asn-304; these read GE and SLH. The active-site S-methylcysteine intermediate is Cys-347.

The protein belongs to the radical SAM superfamily. RlmN family. Requires [4Fe-4S] cluster as cofactor.

The protein resides in the cytoplasm. The catalysed reaction is adenosine(2503) in 23S rRNA + 2 reduced [2Fe-2S]-[ferredoxin] + 2 S-adenosyl-L-methionine = 2-methyladenosine(2503) in 23S rRNA + 5'-deoxyadenosine + L-methionine + 2 oxidized [2Fe-2S]-[ferredoxin] + S-adenosyl-L-homocysteine. The enzyme catalyses adenosine(37) in tRNA + 2 reduced [2Fe-2S]-[ferredoxin] + 2 S-adenosyl-L-methionine = 2-methyladenosine(37) in tRNA + 5'-deoxyadenosine + L-methionine + 2 oxidized [2Fe-2S]-[ferredoxin] + S-adenosyl-L-homocysteine. In terms of biological role, specifically methylates position 2 of adenine 2503 in 23S rRNA and position 2 of adenine 37 in tRNAs. m2A2503 modification seems to play a crucial role in the proofreading step occurring at the peptidyl transferase center and thus would serve to optimize ribosomal fidelity. The polypeptide is Dual-specificity RNA methyltransferase RlmN (Herminiimonas arsenicoxydans).